Here is a 684-residue protein sequence, read N- to C-terminus: Threonine--tRNA ligase (684 aa).

The region spanning 1–66 (MTVPATDSCP…DTDAEVVPVA (66 aa)) is the TGS domain. The tract at residues 261-567 (DHRKLGSELD…LTEHYAGAFP (307 aa)) is catalytic. 3 residues coordinate Zn(2+): cysteine 366, histidine 417, and histidine 544.

It belongs to the class-II aminoacyl-tRNA synthetase family. Homodimer. Zn(2+) serves as cofactor.

It localises to the cytoplasm. It carries out the reaction tRNA(Thr) + L-threonine + ATP = L-threonyl-tRNA(Thr) + AMP + diphosphate + H(+). Functionally, catalyzes the attachment of threonine to tRNA(Thr) in a two-step reaction: L-threonine is first activated by ATP to form Thr-AMP and then transferred to the acceptor end of tRNA(Thr). Also edits incorrectly charged L-seryl-tRNA(Thr). The protein is Threonine--tRNA ligase of Mycolicibacterium paratuberculosis (strain ATCC BAA-968 / K-10) (Mycobacterium paratuberculosis).